The following is a 487-amino-acid chain: Probable cytochrome P450 516A1 (487 aa).

A helical transmembrane segment spans residues 1-21 (MIILLLSIIIFILYIVKIFKN). Position 434 (C434) interacts with heme.

This sequence belongs to the cytochrome P450 family. Heme serves as cofactor.

It localises to the membrane. The chain is Probable cytochrome P450 516A1 (cyp516A1) from Dictyostelium discoideum (Social amoeba).